The sequence spans 193 residues: NAD(P)H-quinone oxidoreductase subunit I (193 aa).

4Fe-4S ferredoxin-type domains follow at residues 55 to 84 and 95 to 124; these read GRIH…VDWE and KHYS…VTEE. 8 residues coordinate [4Fe-4S] cluster: cysteine 64, cysteine 67, cysteine 70, cysteine 74, cysteine 104, cysteine 107, cysteine 110, and cysteine 114.

Belongs to the complex I 23 kDa subunit family. In terms of assembly, NDH-1 is composed of at least 11 different subunits. [4Fe-4S] cluster serves as cofactor.

The protein localises to the cellular thylakoid membrane. The enzyme catalyses a plastoquinone + NADH + (n+1) H(+)(in) = a plastoquinol + NAD(+) + n H(+)(out). It catalyses the reaction a plastoquinone + NADPH + (n+1) H(+)(in) = a plastoquinol + NADP(+) + n H(+)(out). In terms of biological role, NDH-1 shuttles electrons from an unknown electron donor, via FMN and iron-sulfur (Fe-S) centers, to quinones in the respiratory and/or the photosynthetic chain. The immediate electron acceptor for the enzyme in this species is believed to be plastoquinone. Couples the redox reaction to proton translocation, and thus conserves the redox energy in a proton gradient. The polypeptide is NAD(P)H-quinone oxidoreductase subunit I (Cyanothece sp. (strain PCC 7425 / ATCC 29141)).